Consider the following 109-residue polypeptide: uncharacterized protein (109 aa).

The signal sequence occupies residues Met1–Ser23. The N-linked (GlcNAc...) asparagine glycan is linked to Asn27. The tract at residues Tyr45–Asn109 is disordered. The span at Pro54–Gln72 shows a compositional bias: low complexity. Positions Lys94–Gln103 are enriched in basic and acidic residues.

It localises to the secreted. This is an uncharacterized protein from Dictyostelium discoideum (Social amoeba).